The chain runs to 311 residues: Olfactory receptor 1073 (311 aa).

Over 1–25 (MKQQNDTQILQFLLLGLSENTELQP) the chain is Extracellular. Asn5 carries N-linked (GlcNAc...) asparagine glycosylation. A helical transmembrane segment spans residues 26-46 (LIYWLFFSMYLVTVWGNLIII). Residues 47–57 (LATVLDFRLHT) lie on the Cytoplasmic side of the membrane. Residues 58-78 (AMYFFLCNLSFVDICLISTTI) form a helical membrane-spanning segment. At 79 to 97 (PKMLANVHLNHKAITYEGC) the chain is on the extracellular side. Cys97 and Cys179 are joined by a disulfide. Residues 98–118 (IMQIYFFTLFVGLDNFLLAVM) traverse the membrane as a helical segment. Residues 119–133 (AYDRFVAICHPLRYT) lie on the Cytoplasmic side of the membrane. A helical membrane pass occupies residues 134 to 154 (SIMTPHLCMSLVLVSWIASVL). Asn155 is a glycosylation site (N-linked (GlcNAc...) asparagine). At 155–196 (NSSLQSFLVLQLSFCTEVEIPHFFCELSMLVHLACSDTFLSD) the chain is on the extracellular side. The chain crosses the membrane as a helical span at residues 197–217 (MAMNVLAALLGGGCLVGILYS). Over 218–244 (YSKIVSSIQAISSAEGKYKAFSTCVSH) the chain is Cytoplasmic. A helical membrane pass occupies residues 245-265 (LSVVSLFYCTLLGVYLSSAVT). Residues 266–271 (QNSHST) are Extracellular-facing. A helical transmembrane segment spans residues 272–292 (AATSLMYTVVTPMLNPFIYSL). The Cytoplasmic segment spans residues 293–311 (RNDNIKRALKNFVKKKLEK).

It belongs to the G-protein coupled receptor 1 family. As to expression, tongue specific.

Its subcellular location is the cell membrane. Its function is as follows. Possible taste receptor. The protein is Olfactory receptor 1073 (Olr1073) of Rattus norvegicus (Rat).